The sequence spans 367 residues: DNA polymerase IV (367 aa).

The region spanning Ile14–Gly198 is the UmuC domain. The Mg(2+) site is built by Asp18 and Asp116. Glu117 is an active-site residue.

Belongs to the DNA polymerase type-Y family. As to quaternary structure, monomer. Mg(2+) serves as cofactor.

It localises to the cytoplasm. It catalyses the reaction DNA(n) + a 2'-deoxyribonucleoside 5'-triphosphate = DNA(n+1) + diphosphate. Its function is as follows. Poorly processive, error-prone DNA polymerase involved in untargeted mutagenesis. Copies undamaged DNA at stalled replication forks, which arise in vivo from mismatched or misaligned primer ends. These misaligned primers can be extended by PolIV. Exhibits no 3'-5' exonuclease (proofreading) activity. May be involved in translesional synthesis, in conjunction with the beta clamp from PolIII. The sequence is that of DNA polymerase IV from Streptococcus thermophilus (strain CNRZ 1066).